The sequence spans 237 residues: CDP-diacylglycerol--inositol 3-phosphatidyltransferase (237 aa).

Residues 1-12 (MGKNEQKDPNVY) lie on the Cytoplasmic side of the membrane. Residues 13 to 33 (FFVPNLIGFTRVFLVLISLYF) form a helical membrane-spanning segment. Residues 34 to 41 (MSWHPNYC) lie on the Lumenal side of the membrane. Residues 42-62 (TIVYLYSSLLDAFDGWAARKL) form a helical membrane-spanning segment. Mg(2+) contacts are provided by aspartate 52 and aspartate 55. Residues glycine 56, arginine 60, and threonine 66 each coordinate a CDP-1,2-diacyl-sn-glycerol. Over 63–71 (HQATNFGAI) the chain is Cytoplasmic. Residues 72–92 (LDMVTDRCATSCLLCFLCAAY) traverse the membrane as a helical segment. Mg(2+) contacts are provided by aspartate 73 and aspartate 77. Aspartate 77 acts as the Proton acceptor in catalysis. The Lumenal segment spans residues 93 to 94 (PK). The chain crosses the membrane as a helical span at residues 95–115 (YAIIFQLLVSLDLASHYMHMY). Residues 116 to 144 (STLHQGASSHKTVTKKHNWMLRLYYGNNK) are Cytoplasmic-facing. The chain crosses the membrane as a helical span at residues 145–165 (VLFIFCAANEMFFVALYLLSF). The Lumenal segment spans residues 166–185 (TPRTPPKLGYLPVPSFIYST). The chain crosses the membrane as a helical span at residues 186–206 (GELPLSYPTLLAVLCGPICLA). The Cytoplasmic portion of the chain corresponds to 207-237 (KQIINVVQLVNAANALVKMDVEQRRAAKKLQ).

This sequence belongs to the CDP-alcohol phosphatidyltransferase class-I family. Mn(2+) serves as cofactor. It depends on Mg(2+) as a cofactor.

The protein resides in the microsome membrane. It localises to the endoplasmic reticulum membrane. Its subcellular location is the golgi apparatus membrane. The protein localises to the mitochondrion outer membrane. It carries out the reaction a CDP-1,2-diacyl-sn-glycerol + myo-inositol = a 1,2-diacyl-sn-glycero-3-phospho-(1D-myo-inositol) + CMP + H(+). In terms of biological role, catalyzes the synthesis of phosphatidylinositol (PtdIns). This Schizosaccharomyces pombe (strain 972 / ATCC 24843) (Fission yeast) protein is CDP-diacylglycerol--inositol 3-phosphatidyltransferase (pis1).